A 101-amino-acid polypeptide reads, in one-letter code: Small ribosomal subunit protein uS14 (101 aa).

It belongs to the universal ribosomal protein uS14 family. In terms of assembly, part of the 30S ribosomal subunit. Contacts proteins S3 and S10.

Its function is as follows. Binds 16S rRNA, required for the assembly of 30S particles and may also be responsible for determining the conformation of the 16S rRNA at the A site. The polypeptide is Small ribosomal subunit protein uS14 (Shewanella sediminis (strain HAW-EB3)).